The following is a 99-amino-acid chain: High mobility group nucleosome-binding domain-containing protein 3 (99 aa).

Composition is skewed to basic and acidic residues over residues 1–25 and 39–53; these read MPKR…EPTR and PESK…KEPG. The disordered stretch occupies residues 1–99; it reads MPKRKSPENT…RTESIEKEGE (99 aa). Ser-6 bears the Phosphoserine mark. Thr-10 bears the Phosphothreonine mark. 2 positions are modified to phosphoserine: Ser-78 and Ser-93. Residues 83–99 show a composition bias toward basic and acidic residues; it reads TKVEEAQRTESIEKEGE.

It belongs to the HMGN family. As to quaternary structure, interacts with the ligand binding domain of the thyroid receptor (TR) (in vitro). Requires the presence of thyroid hormone for its interaction. Interacts with transcriptional regulator SEHBP. Interacts with nucleosomes. In terms of tissue distribution, expressed in the brain, eye, prostate, thyroid, kidney, testis, glial cells and insulin-producing cells of the Langerhans pancreatic islets. In the brain, expressed in the lateral olfactory tract, anterior commissure, corpus callosum, internal capsule, fornix, stria medullans, optic tract, axon bundles, Purkinje cell layer and granular layer of the cerebellum. In retina, expressed in the nuclei of cells in the inner nuclear layer including amacrine, bipolar and horizontal neurons and in the nuclei of ganglion neurons. Detected at low levels in the liver.

It localises to the nucleus. Its function is as follows. Binds to nucleosomes, regulating chromatin structure and consequently, chromatin-dependent processes such as transcription, DNA replication and DNA repair. Affects both insulin and glucagon levels and modulates the expression of pancreatic genes involved in insulin secretion. Regulates the expression of the glucose transporter SLC2A2 by binding specifically to its promoter region and recruiting PDX1 and additional transcription factors. Regulates the expression of SLC6A9, a glycine transporter which regulates the glycine concentration in synaptic junctions in the central nervous system, by binding to its transcription start site. May play a role in ocular development and astrocyte function. The protein is High mobility group nucleosome-binding domain-containing protein 3 (Hmgn3) of Mus musculus (Mouse).